A 634-amino-acid chain; its full sequence is tRNA uridine 5-carboxymethylaminomethyl modification enzyme MnmG (634 aa).

Residue 14–19 coordinates FAD; that stretch reads GGGHAG. 279 to 293 is an NAD(+) binding site; it reads GPRYCPSIEDKVVRF.

It belongs to the MnmG family. As to quaternary structure, homodimer. Heterotetramer of two MnmE and two MnmG subunits. Requires FAD as cofactor.

The protein resides in the cytoplasm. In terms of biological role, NAD-binding protein involved in the addition of a carboxymethylaminomethyl (cmnm) group at the wobble position (U34) of certain tRNAs, forming tRNA-cmnm(5)s(2)U34. This chain is tRNA uridine 5-carboxymethylaminomethyl modification enzyme MnmG, found in Xanthomonas oryzae pv. oryzae (strain KACC10331 / KXO85).